The following is a 311-amino-acid chain: Acetyl-coenzyme A carboxylase carboxyl transferase subunit alpha (311 aa).

In terms of domain architecture, CoA carboxyltransferase C-terminal spans 36 to 286 (KLEKEVEKTF…KEYFIKSLAE (251 aa)).

It belongs to the AccA family. Acetyl-CoA carboxylase is a heterohexamer composed of biotin carboxyl carrier protein (AccB), biotin carboxylase (AccC) and two subunits each of ACCase subunit alpha (AccA) and ACCase subunit beta (AccD).

It is found in the cytoplasm. The enzyme catalyses N(6)-carboxybiotinyl-L-lysyl-[protein] + acetyl-CoA = N(6)-biotinyl-L-lysyl-[protein] + malonyl-CoA. Its pathway is lipid metabolism; malonyl-CoA biosynthesis; malonyl-CoA from acetyl-CoA: step 1/1. Functionally, component of the acetyl coenzyme A carboxylase (ACC) complex. First, biotin carboxylase catalyzes the carboxylation of biotin on its carrier protein (BCCP) and then the CO(2) group is transferred by the carboxyltransferase to acetyl-CoA to form malonyl-CoA. The polypeptide is Acetyl-coenzyme A carboxylase carboxyl transferase subunit alpha (Aliarcobacter butzleri (strain RM4018) (Arcobacter butzleri)).